We begin with the raw amino-acid sequence, 120 residues long: Glycophorin-A (120 aa).

Pyrrolidone carboxylic acid is present on Q1. A disordered region spans residues 1–40 (QTIATGSPPIAGTSDLSTITSAATPTFTTEQDGREQGDGL). O-linked (GalNAc...) threonine glycans are attached at residues T2 and T5. S7 carries O-linked (GalNAc...) serine glycosylation. T13 is a glycosylation site (O-linked (GalNAc...) threonine). The O-linked (GalNAc...) serine glycan is linked to S17. Over residues 17–29 (STITSAATPTFTT) the composition is skewed to low complexity. Residues T18 and T20 are each glycosylated (O-linked (GalNAc...) threonine). S21 carries an O-linked (GalNAc...) serine glycan. O-linked (GalNAc...) threonine glycans are attached at residues T24 and T28. Residues 50 to 72 (VITVIILGVMAGIIGIILLLAYV) traverse the membrane as a helical segment. The tract at residues 78 to 120 (KRPPADVPPPASTVPSADAPPPVSEDDETSLTSVETDYPGDSQ) is disordered. The segment covering 82 to 100 (ADVPPPASTVPSADAPPPV) has biased composition (pro residues). The span at 107 to 120 (SLTSVETDYPGDSQ) shows a compositional bias: polar residues. S119 is subject to Phosphoserine.

Belongs to the glycophorin-A family. In terms of assembly, homodimer.

The protein resides in the membrane. Its function is as follows. Glycophorin A is the major intrinsic membrane sialoglycoprotein of the erythrocyte. Appears to be important for the function of SLC4A1 and is required for high activity of SLC4A1. May be involved in translocation of SLC4A1 to the plasma membrane. In Equus caballus (Horse), this protein is Glycophorin-A.